The sequence spans 184 residues: Ribosome-recycling factor (184 aa).

A disordered region spans residues 134–167 (MNDQLKKDEKNGDITEDELRSGTEDVQKATDNSI).

This sequence belongs to the RRF family.

The protein localises to the cytoplasm. Responsible for the release of ribosomes from messenger RNA at the termination of protein biosynthesis. May increase the efficiency of translation by recycling ribosomes from one round of translation to another. This Staphylococcus aureus (strain Mu3 / ATCC 700698) protein is Ribosome-recycling factor.